The primary structure comprises 82 residues: Small ribosomal subunit protein bS20 (82 aa).

The protein belongs to the bacterial ribosomal protein bS20 family.

Its function is as follows. Binds directly to 16S ribosomal RNA. This chain is Small ribosomal subunit protein bS20, found in Streptococcus suis (strain 98HAH33).